A 157-amino-acid chain; its full sequence is 6,7-dimethyl-8-ribityllumazine synthase (157 aa).

5-amino-6-(D-ribitylamino)uracil-binding positions include phenylalanine 22, 57-59 (AYE), and 81-83 (TVI). 86–87 (GT) provides a ligand contact to (2S)-2-hydroxy-3-oxobutyl phosphate. Histidine 89 (proton donor) is an active-site residue. 5-amino-6-(D-ribitylamino)uracil is bound at residue phenylalanine 114. Residue arginine 128 participates in (2S)-2-hydroxy-3-oxobutyl phosphate binding.

Belongs to the DMRL synthase family. In terms of assembly, forms an icosahedral capsid composed of 60 subunits, arranged as a dodecamer of pentamers.

The enzyme catalyses (2S)-2-hydroxy-3-oxobutyl phosphate + 5-amino-6-(D-ribitylamino)uracil = 6,7-dimethyl-8-(1-D-ribityl)lumazine + phosphate + 2 H2O + H(+). Its pathway is cofactor biosynthesis; riboflavin biosynthesis; riboflavin from 2-hydroxy-3-oxobutyl phosphate and 5-amino-6-(D-ribitylamino)uracil: step 1/2. Its function is as follows. Catalyzes the formation of 6,7-dimethyl-8-ribityllumazine by condensation of 5-amino-6-(D-ribitylamino)uracil with 3,4-dihydroxy-2-butanone 4-phosphate. This is the penultimate step in the biosynthesis of riboflavin. This is 6,7-dimethyl-8-ribityllumazine synthase from Histophilus somni (strain 129Pt) (Haemophilus somnus).